We begin with the raw amino-acid sequence, 307 residues long: 4-diphosphocytidyl-2-C-methyl-D-erythritol kinase (307 aa).

K9 is an active-site residue. ATP is bound at residue 94 to 104 (PIGAGLAGGSS). D136 is a catalytic residue.

This sequence belongs to the GHMP kinase family. IspE subfamily.

The enzyme catalyses 4-CDP-2-C-methyl-D-erythritol + ATP = 4-CDP-2-C-methyl-D-erythritol 2-phosphate + ADP + H(+). Its pathway is isoprenoid biosynthesis; isopentenyl diphosphate biosynthesis via DXP pathway; isopentenyl diphosphate from 1-deoxy-D-xylulose 5-phosphate: step 3/6. Functionally, catalyzes the phosphorylation of the position 2 hydroxy group of 4-diphosphocytidyl-2C-methyl-D-erythritol. This Synechococcus sp. (strain CC9902) protein is 4-diphosphocytidyl-2-C-methyl-D-erythritol kinase.